We begin with the raw amino-acid sequence, 486 residues long: Aspartyl/glutamyl-tRNA(Asn/Gln) amidotransferase subunit B (486 aa).

Belongs to the GatB/GatE family. GatB subfamily. As to quaternary structure, heterotrimer of A, B and C subunits.

It carries out the reaction L-glutamyl-tRNA(Gln) + L-glutamine + ATP + H2O = L-glutaminyl-tRNA(Gln) + L-glutamate + ADP + phosphate + H(+). The enzyme catalyses L-aspartyl-tRNA(Asn) + L-glutamine + ATP + H2O = L-asparaginyl-tRNA(Asn) + L-glutamate + ADP + phosphate + 2 H(+). Functionally, allows the formation of correctly charged Asn-tRNA(Asn) or Gln-tRNA(Gln) through the transamidation of misacylated Asp-tRNA(Asn) or Glu-tRNA(Gln) in organisms which lack either or both of asparaginyl-tRNA or glutaminyl-tRNA synthetases. The reaction takes place in the presence of glutamine and ATP through an activated phospho-Asp-tRNA(Asn) or phospho-Glu-tRNA(Gln). The chain is Aspartyl/glutamyl-tRNA(Asn/Gln) amidotransferase subunit B from Leptospira borgpetersenii serovar Hardjo-bovis (strain L550).